Here is a 198-residue protein sequence, read N- to C-terminus: Outer-membrane lipoprotein carrier protein (198 aa).

The first 16 residues, 1 to 16 (MKKWLVVFFLSASALA), serve as a signal peptide directing secretion.

It belongs to the LolA family. Monomer.

The protein resides in the periplasm. Participates in the translocation of lipoproteins from the inner membrane to the outer membrane. Only forms a complex with a lipoprotein if the residue after the N-terminal Cys is not an aspartate (The Asp acts as a targeting signal to indicate that the lipoprotein should stay in the inner membrane). The protein is Outer-membrane lipoprotein carrier protein of Vibrio vulnificus (strain YJ016).